The chain runs to 208 residues: 3-demethoxyubiquinol 3-hydroxylase (208 aa).

Positions 57, 87, 90, 139, 171, and 174 each coordinate Fe cation.

The protein belongs to the COQ7 family. Fe cation is required as a cofactor.

The protein resides in the cell membrane. The catalysed reaction is a 5-methoxy-2-methyl-3-(all-trans-polyprenyl)benzene-1,4-diol + AH2 + O2 = a 3-demethylubiquinol + A + H2O. It participates in cofactor biosynthesis; ubiquinone biosynthesis. Functionally, catalyzes the hydroxylation of 2-nonaprenyl-3-methyl-6-methoxy-1,4-benzoquinol during ubiquinone biosynthesis. This chain is 3-demethoxyubiquinol 3-hydroxylase, found in Verminephrobacter eiseniae (strain EF01-2).